The following is a 657-amino-acid chain: MSIRDLYHARASPFISLEFFPPKTELGTRNLMERMHRMTALDPLFITVTWGAGGTTAEKTLTLASLAQQTLNIPVCMHLTCTNTEKAIIDDALDRCYNAGIRNILALRGDPPIGEDWLDSQSNESPFKYAVDLVRYIKQSYGDKFCVGVAAYPEGHCEGEAEGHEQDPLKDLVYLKEKVEAGADFVITQLFYDVEKFLTFEMLFRERISQDLPLFPGLMPINSYLLFHRAAKLSHASIPPAILSRFPPEIQSDDNAVKSIGVDILIELIQEIYQRTSGRIKGFHFYTLNLEKAIAQIVSQSPVLSHIVNESSEEEGEDETSGEIGSIENVPIEDADGDIVLDDSNEETVANRKRRRHSSLDSAKLIFNRAIVTEKGLRYNNENGSMPSKKALISISKGHGTLGRDATWDEFPNGRFGDSRSPAYGEIDGYGPSIKVSKSKALELWGIPKTIGDLKDIFIKYLEGSTDAIPWSDLGLSAETALIQEELIQLNYRGYLTLASQPATNATLSSDKIFGWGPAKGRLYQKAFVEMFIHRQQWETTLKPKLDHYGRRKFSYYAGDSSGSFETNLDPHSSSVVTWGVFPNSPVKQTTIIEEESFKAWRDEAFSIWSEWAKLFPRNTPANILLRLVHKDYCLVSIVHHDFKETDELWEMLLDQA.

The active-site Proton donor/acceptor is Glu-18. NAD(+) is bound by residues 18–23 and 49–50; these read EFFPPK and TW. Residues 49–50, His-78, and 108–110 each bind FAD; these read TW and RGD. Asp-110 contributes to the substrate binding site. Phosphoserine is present on Ser-120. FAD contacts are provided by residues 129-130, Tyr-152, Asp-171, and Lys-178; that span reads YA. Residues Gln-189 and Tyr-286 each contribute to the substrate site. A Phosphoserine modification is found at Ser-301. Residues 308–329 are disordered; that stretch reads VNESSEEEGEDETSGEIGSIEN. The span at 311–321 shows a compositional bias: acidic residues; sequence SSEEEGEDETS. Ser-358 carries the phosphoserine modification.

This sequence belongs to the methylenetetrahydrofolate reductase family. FAD serves as cofactor.

The catalysed reaction is (6S)-5-methyl-5,6,7,8-tetrahydrofolate + NADP(+) = (6R)-5,10-methylene-5,6,7,8-tetrahydrofolate + NADPH + H(+). The enzyme catalyses (6S)-5-methyl-5,6,7,8-tetrahydrofolate + NAD(+) = (6R)-5,10-methylene-5,6,7,8-tetrahydrofolate + NADH + H(+). The protein operates within one-carbon metabolism; tetrahydrofolate interconversion. The protein is Methylenetetrahydrofolate reductase 1 (MET12) of Saccharomyces cerevisiae (strain ATCC 204508 / S288c) (Baker's yeast).